The sequence spans 150 residues: Large ribosomal subunit protein uL13 (150 aa).

Residues 129 to 150 (PEHPHSAQRPQTLQLNPAASSQ) form a disordered region. Residues 136–150 (QRPQTLQLNPAASSQ) are compositionally biased toward polar residues.

It belongs to the universal ribosomal protein uL13 family. Part of the 50S ribosomal subunit.

This protein is one of the early assembly proteins of the 50S ribosomal subunit, although it is not seen to bind rRNA by itself. It is important during the early stages of 50S assembly. This Prochlorococcus marinus (strain MIT 9303) protein is Large ribosomal subunit protein uL13.